The sequence spans 208 residues: Uracil phosphoribosyltransferase (208 aa).

Residues R78, R103, and 130–138 each bind 5-phospho-alpha-D-ribose 1-diphosphate; that span reads DPMLATGGS. Residues I193 and 198-200 each bind uracil; that span reads GDA. Residue D199 participates in 5-phospho-alpha-D-ribose 1-diphosphate binding.

Belongs to the UPRTase family. Mg(2+) is required as a cofactor.

It carries out the reaction UMP + diphosphate = 5-phospho-alpha-D-ribose 1-diphosphate + uracil. It participates in pyrimidine metabolism; UMP biosynthesis via salvage pathway; UMP from uracil: step 1/1. Its activity is regulated as follows. Allosterically activated by GTP. Catalyzes the conversion of uracil and 5-phospho-alpha-D-ribose 1-diphosphate (PRPP) to UMP and diphosphate. This chain is Uracil phosphoribosyltransferase, found in Mannheimia succiniciproducens (strain KCTC 0769BP / MBEL55E).